A 230-amino-acid polypeptide reads, in one-letter code: Endonuclease NucS (230 aa).

The protein belongs to the NucS endonuclease family.

The protein resides in the cytoplasm. Its function is as follows. Cleaves both 3' and 5' ssDNA extremities of branched DNA structures. The polypeptide is Endonuclease NucS (Corynebacterium aurimucosum (strain ATCC 700975 / DSM 44827 / CIP 107346 / CN-1) (Corynebacterium nigricans)).